We begin with the raw amino-acid sequence, 557 residues long: Potassium-transporting ATPase potassium-binding subunit (557 aa).

10 consecutive transmembrane segments (helical) span residues 6 to 26 (IQLL…GLGL), 59 to 79 (ALSL…ILFF), 127 to 147 (AGLT…LLAL), 172 to 192 (LYVL…FGVV), 247 to 267 (ISNF…VFLY), 278 to 298 (WAIF…VWTF), 363 to 383 (IVFG…LLTV), 410 to 430 (ILGI…SVSV), 475 to 495 (VMIA…VLVI), and 520 to 540 (FYIL…FPVL).

Belongs to the KdpA family. As to quaternary structure, the system is composed of three essential subunits: KdpA, KdpB and KdpC.

It is found in the cell inner membrane. In terms of biological role, part of the high-affinity ATP-driven potassium transport (or Kdp) system, which catalyzes the hydrolysis of ATP coupled with the electrogenic transport of potassium into the cytoplasm. This subunit binds the periplasmic potassium ions and delivers the ions to the membrane domain of KdpB through an intramembrane tunnel. The polypeptide is Potassium-transporting ATPase potassium-binding subunit (Leptospira interrogans serogroup Icterohaemorrhagiae serovar Lai (strain 56601)).